The sequence spans 290 residues: 4-hydroxy-tetrahydrodipicolinate synthase (290 aa).

Ser44 contacts pyruvate. Residue Tyr132 is the Proton donor/acceptor of the active site. The active-site Schiff-base intermediate with substrate is Lys161. Pyruvate is bound at residue Val202.

The protein belongs to the DapA family. As to quaternary structure, homotetramer; dimer of dimers.

The protein resides in the cytoplasm. It catalyses the reaction L-aspartate 4-semialdehyde + pyruvate = (2S,4S)-4-hydroxy-2,3,4,5-tetrahydrodipicolinate + H2O + H(+). It functions in the pathway amino-acid biosynthesis; L-lysine biosynthesis via DAP pathway; (S)-tetrahydrodipicolinate from L-aspartate: step 3/4. Catalyzes the condensation of (S)-aspartate-beta-semialdehyde [(S)-ASA] and pyruvate to 4-hydroxy-tetrahydrodipicolinate (HTPA). The polypeptide is 4-hydroxy-tetrahydrodipicolinate synthase (Hydrogenobaculum sp. (strain Y04AAS1)).